Reading from the N-terminus, the 122-residue chain is Insulin-like growth factor 1 (122 aa).

Residues 49–77 are b; that stretch reads GPETLCGAELVDALQFVCGDRGFYFNKPT. 3 disulfides stabilise this stretch: Cys-54-Cys-96, Cys-66-Cys-109, and Cys-95-Cys-100. The interval 78-89 is c; sequence GYGSSSRRAPQT. Positions 90–110 are a; that stretch reads GIVDECCFRSCDLRRLEMYCA. A d region spans residues 111–118; it reads PLKPAKSA. The propeptide at 119–122 is e peptide; the sequence is RSVR.

The protein belongs to the insulin family. In terms of assembly, forms a ternary complex with IGFR1 and ITGAV:ITGB3. Forms a ternary complex with IGFR1 and ITGA6:ITGB4. Forms a ternary complex with IGFBP3 and ALS.

It is found in the secreted. Its function is as follows. The insulin-like growth factors, isolated from plasma, are structurally and functionally related to insulin but have a much higher growth-promoting activity. May be a physiological regulator of [1-14C]-2-deoxy-D-glucose (2DG) transport and glycogen synthesis in osteoblasts. Stimulates glucose transport in bone-derived osteoblastic (PyMS) cells and is effective at much lower concentrations than insulin, not only regarding glycogen and DNA synthesis but also with regard to enhancing glucose uptake. May play a role in synapse maturation. Ca(2+)-dependent exocytosis of IGF1 is required for sensory perception of smell in the olfactory bulb. Acts as a ligand for IGF1R. Binds to the alpha subunit of IGF1R, leading to the activation of the intrinsic tyrosine kinase activity which autophosphorylates tyrosine residues in the beta subunit thus initiating a cascade of down-stream signaling events leading to activation of the PI3K-AKT/PKB and the Ras-MAPK pathways. Binds to integrins ITGAV:ITGB3 and ITGA6:ITGB4. Its binding to integrins and subsequent ternary complex formation with integrins and IGFR1 are essential for IGF1 signaling. Induces the phosphorylation and activation of IGFR1, MAPK3/ERK1, MAPK1/ERK2 and AKT1. As part of the MAPK/ERK signaling pathway, acts as a negative regulator of apoptosis in cardiomyocytes via promotion of STUB1/CHIP-mediated ubiquitination and degradation of ICER-type isoforms of CREM. The sequence is that of Insulin-like growth factor 1 from Equus caballus (Horse).